The chain runs to 485 residues: Tektin-5 (485 aa).

Coiled coils occupy residues 114-185 (RLTD…EVNC), 225-247 (QEQMRKLAQRIDIQMRDNRDAQH), 307-385 (QNMR…MAKE), and 421-444 (TIDDTLQTLKLRLRETQDTLQLLV).

The protein belongs to the tektin family. Microtubule inner protein component of sperm flagellar doublet microtubules. Interacts with TEKT3. Post-translationally, ubiquitinated, leading to its degradation. Deubiquitinated by USP16, promoting its stability.

The protein resides in the cytoplasm. It is found in the cytoskeleton. It localises to the flagellum axoneme. Sperm-specific microtubule inner protein (MIP) part of the dynein-decorated doublet microtubules (DMTs) in flagellar axoneme. Forms an extensive interaction network in different conformations that reinforces the helix bundle composed by other tektin proteins (TEKT1 to TEKT4) and MIPs to anchor the tektin bundle onto the tubulin wall of A-tubule of the sperm flagellum. The polypeptide is Tektin-5 (TEKT5) (Homo sapiens (Human)).